We begin with the raw amino-acid sequence, 211 residues long: ATP phosphoribosyltransferase (211 aa).

The protein belongs to the ATP phosphoribosyltransferase family. Short subfamily. As to quaternary structure, heteromultimer composed of HisG and HisZ subunits.

Its subcellular location is the cytoplasm. The catalysed reaction is 1-(5-phospho-beta-D-ribosyl)-ATP + diphosphate = 5-phospho-alpha-D-ribose 1-diphosphate + ATP. Its pathway is amino-acid biosynthesis; L-histidine biosynthesis; L-histidine from 5-phospho-alpha-D-ribose 1-diphosphate: step 1/9. Functionally, catalyzes the condensation of ATP and 5-phosphoribose 1-diphosphate to form N'-(5'-phosphoribosyl)-ATP (PR-ATP). Has a crucial role in the pathway because the rate of histidine biosynthesis seems to be controlled primarily by regulation of HisG enzymatic activity. This is ATP phosphoribosyltransferase from Sorangium cellulosum (strain So ce56) (Polyangium cellulosum (strain So ce56)).